The chain runs to 435 residues: UDP-glucuronic acid decarboxylase 1 (435 aa).

Residues 1 to 33 (MKQLHKQMSSKRDEETIPMSQSSPYSPKTLKHP) are disordered. The Cytoplasmic portion of the chain corresponds to 1 to 48 (MKQLHKQMSSKRDEETIPMSQSSPYSPKTLKHPRSLPRSLHYLFREQR). Residues 49–69 (LLFILVGILIGSTFFILQPSL) traverse the membrane as a helical; Signal-anchor for type II membrane protein segment. The Lumenal portion of the chain corresponds to 70 to 435 (SRLGAAESTS…ILNEDEGKGL (366 aa)). Residues 91 to 100 (DSPPSRSTFN) are compositionally biased toward polar residues. Residues 91 to 110 (DSPPSRSTFNSGGGGGRTGR) form a disordered region. Gly129, Phe130, Val131, Asp150, Asn151, Phe153, Thr154, Gly155, Asp175, and Val176 together coordinate NAD(+). A UDP-alpha-D-glucuronate-binding site is contributed by Ile180. Leu190 contributes to the NAD(+) binding site. Lys208 contacts UDP-alpha-D-glucuronate. Thr209 contributes to the NAD(+) binding site. Asn216, Gly219, Lys222, and Arg223 together coordinate UDP-alpha-D-glucuronate. Residues Tyr262 and Lys266 each coordinate NAD(+). Tyr262 serves as the catalytic Proton acceptor. Tyr276 contributes to the UDP-alpha-D-glucuronate binding site. NAD(+)-binding residues include Thr292 and Arg303. A disordered region spans residues 380–401 (EFKPNTADDPHKRKPDISKAKE). Residues 385 to 401 (TADDPHKRKPDISKAKE) are compositionally biased toward basic and acidic residues.

It belongs to the NAD(P)-dependent epimerase/dehydratase family. UDP-glucuronic acid decarboxylase subfamily. It depends on NAD(+) as a cofactor. Ubiquitous.

Its subcellular location is the golgi apparatus. The protein resides in the golgi stack membrane. It catalyses the reaction UDP-alpha-D-glucuronate + H(+) = UDP-alpha-D-xylose + CO2. Its pathway is nucleotide-sugar biosynthesis; UDP-alpha-D-xylose biosynthesis; UDP-alpha-D-xylose from UDP-alpha-D-glucuronate: step 1/1. Its function is as follows. Catalyzes the NAD-dependent decarboxylation of UDP-glucuronic acid to UDP-xylose. Necessary for the biosynthesis of the core tetrasaccharide in glycosaminoglycan biosynthesis. In Arabidopsis thaliana (Mouse-ear cress), this protein is UDP-glucuronic acid decarboxylase 1.